The sequence spans 153 residues: 6,7-dimethyl-8-ribityllumazine synthase (153 aa).

Residues Phe-22, 56-58, and 80-82 each bind 5-amino-6-(D-ribitylamino)uracil; these read AFE and AVI. 85-86 is a (2S)-2-hydroxy-3-oxobutyl phosphate binding site; the sequence is AT. The active-site Proton donor is the His-88. Phe-113 contacts 5-amino-6-(D-ribitylamino)uracil. Arg-127 lines the (2S)-2-hydroxy-3-oxobutyl phosphate pocket.

Belongs to the DMRL synthase family.

The enzyme catalyses (2S)-2-hydroxy-3-oxobutyl phosphate + 5-amino-6-(D-ribitylamino)uracil = 6,7-dimethyl-8-(1-D-ribityl)lumazine + phosphate + 2 H2O + H(+). It participates in cofactor biosynthesis; riboflavin biosynthesis; riboflavin from 2-hydroxy-3-oxobutyl phosphate and 5-amino-6-(D-ribitylamino)uracil: step 1/2. Functionally, catalyzes the formation of 6,7-dimethyl-8-ribityllumazine by condensation of 5-amino-6-(D-ribitylamino)uracil with 3,4-dihydroxy-2-butanone 4-phosphate. This is the penultimate step in the biosynthesis of riboflavin. This chain is 6,7-dimethyl-8-ribityllumazine synthase, found in Alkaliphilus metalliredigens (strain QYMF).